The chain runs to 1089 residues: Carbamoyl phosphate synthase large chain (1089 aa).

The interval 1 to 399 is carboxyphosphate synthetic domain; that stretch reads MPKRTDIKSI…SIQKALCSLE (399 aa). Residues arginine 127, arginine 167, glycine 173, glycine 174, glutamate 206, leucine 208, glutamate 213, glycine 239, valine 240, histidine 241, glutamine 283, and glutamate 297 each coordinate ATP. The ATP-grasp 1 domain occupies 131 to 326; the sequence is KECMKKIGMD…IAKVATLLAV (196 aa). Glutamine 283, glutamate 297, and asparagine 299 together coordinate Mg(2+). Residues glutamine 283, glutamate 297, and asparagine 299 each contribute to the Mn(2+) site. An oligomerization domain region spans residues 400-553; sequence RSLSGFDRVK…NVSELTQSKN (154 aa). A carbamoyl phosphate synthetic domain region spans residues 554-951; the sequence is DAKDKKEKKV…SYAKSQIASF (398 aa). Residues 680–871 enclose the ATP-grasp 2 domain; the sequence is AEFITKLGIN…LAKVATRVMW (192 aa). Residues arginine 716, glutamine 755, leucine 757, glutamate 762, glycine 787, isoleucine 788, histidine 789, serine 790, glutamine 830, and glutamate 842 each contribute to the ATP site. Mg(2+) is bound by residues glutamine 830, glutamate 842, and asparagine 844. Residues glutamine 830, glutamate 842, and asparagine 844 each contribute to the Mn(2+) site. The 138-residue stretch at 952-1089 folds into the MGS-like domain; sequence NHLPEQGVVF…VKSLQEWLKS (138 aa). The segment at 952 to 1089 is allosteric domain; that stretch reads NHLPEQGVVF…VKSLQEWLKS (138 aa).

Belongs to the CarB family. Composed of two chains; the small (or glutamine) chain promotes the hydrolysis of glutamine to ammonia, which is used by the large (or ammonia) chain to synthesize carbamoyl phosphate. Tetramer of heterodimers (alpha,beta)4. Mg(2+) is required as a cofactor. The cofactor is Mn(2+).

The enzyme catalyses hydrogencarbonate + L-glutamine + 2 ATP + H2O = carbamoyl phosphate + L-glutamate + 2 ADP + phosphate + 2 H(+). The catalysed reaction is hydrogencarbonate + NH4(+) + 2 ATP = carbamoyl phosphate + 2 ADP + phosphate + 2 H(+). It participates in amino-acid biosynthesis; L-arginine biosynthesis; carbamoyl phosphate from bicarbonate: step 1/1. The protein operates within pyrimidine metabolism; UMP biosynthesis via de novo pathway; (S)-dihydroorotate from bicarbonate: step 1/3. Large subunit of the glutamine-dependent carbamoyl phosphate synthetase (CPSase). CPSase catalyzes the formation of carbamoyl phosphate from the ammonia moiety of glutamine, carbonate, and phosphate donated by ATP, constituting the first step of 2 biosynthetic pathways, one leading to arginine and/or urea and the other to pyrimidine nucleotides. The large subunit (synthetase) binds the substrates ammonia (free or transferred from glutamine from the small subunit), hydrogencarbonate and ATP and carries out an ATP-coupled ligase reaction, activating hydrogencarbonate by forming carboxy phosphate which reacts with ammonia to form carbamoyl phosphate. The polypeptide is Carbamoyl phosphate synthase large chain (Campylobacter jejuni subsp. jejuni serotype O:2 (strain ATCC 700819 / NCTC 11168)).